The sequence spans 704 residues: Ion-translocating oxidoreductase complex subunit C (704 aa).

2 4Fe-4S ferredoxin-type domains span residues 368–397 and 407–436; these read MGAP…QQLY and KATA…VQYF. Cys-377, Cys-380, Cys-383, Cys-387, Cys-416, Cys-419, Cys-422, and Cys-426 together coordinate [4Fe-4S] cluster. Positions 536–684 are disordered; sequence RAKQAAHPMA…PADPRKAAVA (149 aa). Residues 556–565 show a composition bias toward low complexity; that stretch reads KAAVEAAIAR.

Belongs to the 4Fe4S bacterial-type ferredoxin family. RnfC subfamily. As to quaternary structure, the complex is composed of six subunits: RsxA, RsxB, RsxC, RsxD, RsxE and RsxG. Requires [4Fe-4S] cluster as cofactor.

The protein resides in the cell inner membrane. Functionally, part of a membrane-bound complex that couples electron transfer with translocation of ions across the membrane. Required to maintain the reduced state of SoxR. The protein is Ion-translocating oxidoreductase complex subunit C of Salmonella choleraesuis (strain SC-B67).